Consider the following 960-residue polypeptide: Leucine-rich repeat receptor-like serine/threonine-protein kinase SKM1 (960 aa).

Positions 1-29 (MSTSHHHHHPPYLITTLFFLFLNFSCLHA) are cleaved as a signal peptide. Residues 30-634 (NELELLLSFK…VRKRSTKSWW (605 aa)) are Extracellular-facing. Residues Cys61 and Cys68 are joined by a disulfide bond. Asn70, Asn83, Asn103, Asn108, Asn129, and Asn134 each carry an N-linked (GlcNAc...) asparagine glycan. LRR repeat units lie at residues 71–96 (ISRVVSLDLSGKNMSGQILTAATFRL), 97–120 (PFLQTINLSNNNLSGPIPHDIFTT), 122–146 (SPSLRYLNLSNNNFSGSIPRGFLPN), 149–168 (TLDLSNNMFTGEIYNDIGVF), 169–194 (SNLRVLDLGGNVLTGHVPGYLGNLSR), 196–216 (EFLTLASNQLTGGVPVELGKM), 217–240 (KNLKWIYLGYNNLSGEIPYQIGGL), 241–264 (SSLNHLDLVYNNLSGPIPPSLGDL), 265–288 (KKLEYMFLYQNKLSGQIPPSIFSL), 290–312 (NLISLDFSDNSLSGEIPELVAQM), 313–336 (QSLEILHLFSNNLTGKIPEGVTSL), 338–360 (RLKVLQLWSNRFSGGIPANLGKH), 361–384 (NNLTVLDLSTNNLTGKLPDTLCDS), 386–408 (HLTKLILFSNSLDSQIPPSLGMC), 409–432 (QSLERVRLQNNGFSGKLPRGFTKL), 434–454 (LVNFLDLSNNNLQGNINTWDM), 455–477 (PQLEMLDLSVNKFFGELPDFSRS), 478–501 (KRLKKLDLSRNKISGVVPQGLMTF), 503–525 (EIMDLDLSENEITGVIPRELSSC), 526–549 (KNLVNLDLSHNNFTGEIPSSFAEF), 550–573 (QVLSDLDLSCNQLSGEIPKNLGNI), and 575–598 (SLVQVNISHNLLHGSLPFTGAFLA). Residue Asn191 is glycosylated (N-linked (GlcNAc...) asparagine). The CLE45 peptide binding motif lies at 221–226 (WIYLGY). N-linked (GlcNAc...) asparagine glycosylation is found at Asn228 and Asn252. N-linked (GlcNAc...) asparagine glycosylation is present at Asn324. Residues Asn362 and Asn372 are each glycosylated (N-linked (GlcNAc...) asparagine). Asn537 carries N-linked (GlcNAc...) asparagine glycosylation. Asn580 and Asn600 each carry an N-linked (GlcNAc...) asparagine glycan. The chain crosses the membrane as a helical span at residues 635–655 (LIITSTFAAFLAVLVSGFFIV). The Cytoplasmic segment spans residues 656–960 (LVFQRTHNVL…TYLSKILSLA (305 aa)). Residues 691–953 (FTVNTILSSL…SSSSSCTTYL (263 aa)) enclose the Protein kinase domain. Residue Thr692 is modified to Phosphothreonine. ATP-binding positions include 697–705 (LSSLKDQNV) and Lys717. Tyr834 carries the post-translational modification Phosphotyrosine.

The protein belongs to the protein kinase superfamily. Ser/Thr protein kinase family. Self-interacts. Binds to CLE45 present in the pistil, particularly under relatively high temperature (at 30 degrees Celsius). Expressed in pollen grains and roots vascular tissues. Present in roots.

It localises to the cell membrane. It catalyses the reaction L-seryl-[protein] + ATP = O-phospho-L-seryl-[protein] + ADP + H(+). It carries out the reaction L-threonyl-[protein] + ATP = O-phospho-L-threonyl-[protein] + ADP + H(+). Receptor with a serine/threonine-protein kinase activity. Together with SKM2, LRR-rich receptor-like kinase (LRR-RLK) required for male fertility by the perception of CLE43 and CLE45 peptides and the transduction of their promoting action in pollen tubes, especially under relatively high temperature (at 30 degrees Celsius), thus conferring tolerance against high temperature probably through the maintenance of mitochondrial activity. Seems to not be involved in the perception of CLE45 peptide in roots. The polypeptide is Leucine-rich repeat receptor-like serine/threonine-protein kinase SKM1 (Arabidopsis thaliana (Mouse-ear cress)).